A 229-amino-acid polypeptide reads, in one-letter code: Ribonuclease 3 (229 aa).

The 123-residue stretch at 5–127 (LSRLERQLGY…LIGAIYLDAG (123 aa)) folds into the RNase III domain. A Mg(2+)-binding site is contributed by Glu40. Asp44 is a catalytic residue. Mg(2+)-binding residues include Asp113 and Glu116. Glu116 is an active-site residue. The DRBM domain occupies 154 to 224 (DPKTRLQEFL…AAAALIALGV (71 aa)).

This sequence belongs to the ribonuclease III family. As to quaternary structure, homodimer. The cofactor is Mg(2+).

The protein resides in the cytoplasm. The enzyme catalyses Endonucleolytic cleavage to 5'-phosphomonoester.. Its function is as follows. Digests double-stranded RNA. Involved in the processing of primary rRNA transcript to yield the immediate precursors to the large and small rRNAs (23S and 16S). Processes some mRNAs, and tRNAs when they are encoded in the rRNA operon. Processes pre-crRNA and tracrRNA of type II CRISPR loci if present in the organism. The polypeptide is Ribonuclease 3 (Pseudomonas fluorescens (strain Pf0-1)).